The chain runs to 341 residues: Glycerol-3-phosphate dehydrogenase [NAD(P)+] (341 aa).

The NADPH site is built by S14, F15, R35, and K108. Residues K108 and G136 each coordinate sn-glycerol 3-phosphate. A140 serves as a coordination point for NADPH. Residues K191, D244, S254, R255, and N256 each coordinate sn-glycerol 3-phosphate. The Proton acceptor role is filled by K191. Residue R255 coordinates NADPH. Positions 279 and 281 each coordinate NADPH.

Belongs to the NAD-dependent glycerol-3-phosphate dehydrogenase family.

The protein localises to the cytoplasm. It catalyses the reaction sn-glycerol 3-phosphate + NAD(+) = dihydroxyacetone phosphate + NADH + H(+). The enzyme catalyses sn-glycerol 3-phosphate + NADP(+) = dihydroxyacetone phosphate + NADPH + H(+). Its pathway is membrane lipid metabolism; glycerophospholipid metabolism. In terms of biological role, catalyzes the reduction of the glycolytic intermediate dihydroxyacetone phosphate (DHAP) to sn-glycerol 3-phosphate (G3P), the key precursor for phospholipid synthesis. The sequence is that of Glycerol-3-phosphate dehydrogenase [NAD(P)+] from Pseudomonas fluorescens (strain SBW25).